The chain runs to 638 residues: Cytoplasmic dynein 1 intermediate chain 2 (638 aa).

Composition is skewed to basic and acidic residues over residues 1-13 and 20-43; these read MSDK…ELER and QIRE…KKEA. Disordered stretches follow at residues 1 to 135 and 154 to 209; these read MSDK…GRGP and VTYT…HELT. Position 2 is an N-acetylserine (serine 2). Residue serine 51 is modified to Diphosphoserine. Phosphoserine is present on residues serine 51 and serine 90. Positions 88–97 are enriched in low complexity; the sequence is PSSKSVSTPS. Threonine 95 is subject to Phosphothreonine. Phosphoserine occurs at positions 97, 101, and 104. Residues 133-165 form an interaction with DYNLT1 region; the sequence is RGPIKLGMAKITQVDFPPREIVTYTKETQTPVT. Residues 190-209 show a composition bias toward basic and acidic residues; it reads EKILKKDEENDSKAPPHELT. WD repeat units lie at residues 277–326, 330–370, 379–420, 429–469, 474–519, and 568–607; these read SKHR…TTPE, HCQS…RTPV, AHTH…HPQD, SKAV…AGIS, GHQG…PLYS, and EGNP…AVPR.

Belongs to the dynein intermediate chain family. Homodimer. The cytoplasmic dynein 1 complex consists of two catalytic heavy chains (HCs) and a number of non-catalytic subunits presented by intermediate chains (ICs), light intermediate chains (LICs) and light chains (LCs); the composition seems to vary in respect to the IC, LIC and LC composition. The heavy chain homodimer serves as a scaffold for the probable homodimeric assembly of the respective non-catalytic subunits. The ICs and LICs bind directly to the HC dimer and the LCs assemble on the IC dimer. Interacts with DYNLT3. Interacts with DYNLT1. Interacts (dephosphorylated at Ser-90) with DCTN1. Interacts with BICD2. Interacts with SPEF2. Interacts with CFAP61. Post-translationally, the phosphorylation status of Ser-90 appears to be involved in dynactin-dependent target binding. In terms of processing, pyrophosphorylation by 5-diphosphoinositol pentakisphosphate (5-IP7) promotes interaction with DCTN1. Serine pyrophosphorylation is achieved by Mg(2+)-dependent, but enzyme independent transfer of a beta-phosphate from a inositol pyrophosphate to a pre-phosphorylated serine residue. As to expression, skeletal muscle, testis, kidney, brain, heart and spleen.

It is found in the cytoplasm. Its subcellular location is the cytoskeleton. Acts as one of several non-catalytic accessory components of the cytoplasmic dynein 1 complex that are thought to be involved in linking dynein to cargos and to adapter proteins that regulate dynein function. Cytoplasmic dynein 1 acts as a motor for the intracellular retrograde motility of vesicles and organelles along microtubules. The intermediate chains mediate the binding of dynein to dynactin via its 150 kDa component (p150-glued) DCTN1. Involved in membrane-transport, such as Golgi apparatus, late endosomes and lysosomes. The protein is Cytoplasmic dynein 1 intermediate chain 2 (Dync1i2) of Rattus norvegicus (Rat).